Here is a 125-residue protein sequence, read N- to C-terminus: DNA-directed RNA polymerase II subunit RPB9 (125 aa).

N-acetylmethionine is present on methionine 1. Residues cysteine 17, cysteine 20, cysteine 39, cysteine 42, cysteine 86, cysteine 89, cysteine 114, and cysteine 119 each coordinate Zn(2+). The C4-type zinc-finger motif lies at 17–42 (CQECNNMLYPKEDKENRILLYACRNC). Residues 82 to 124 (EDHPCQKCGHKEAVFFQSHSARAEDAMRLYYVCTAPHCGHRWT) form a TFIIS-type zinc finger.

Belongs to the archaeal RpoM/eukaryotic RPA12/RPB9/RPC11 RNA polymerase family. In terms of assembly, component of the RNA polymerase II (Pol II) core complex consisting of 12 subunits: a ten-subunit catalytic core composed of POLR2A/RPB1, POLR2B/RPB2, POLR2C/RPB3, POLR2I/RPB9, POLR2J/RPB11, POLR2E/RPABC1, POLR2F/RPABC2, POLR2H/RPABC3, POLR2K/RPABC4 and POLR2L/RPABC5 and a mobile stalk composed of two subunits POLR2D/RPB4 and POLR2G/RPB7, protruding from the core and functioning primarily in transcription initiation. Part of Pol II(G) complex, in which Pol II core associates with an additional subunit POLR2M; unlike conventional Pol II, Pol II(G) functions as a transcriptional repressor. Part of TBP-based Pol II pre-initiation complex (PIC), in which Pol II core assembles with general transcription factors and other specific initiation factors including GTF2E1, GTF2E2, GTF2F1, GTF2F2, TCEA1, ERCC2, ERCC3, GTF2H2, GTF2H3, GTF2H4, GTF2H5, GTF2A1, GTF2A2, GTF2B and TBP; this large multi-subunit PIC complex mediates DNA unwinding and targets Pol II core to the transcription start site where the first phosphodiester bond forms.

The protein localises to the nucleus. The protein resides in the nucleolus. DNA-dependent RNA polymerase catalyzes the transcription of DNA into RNA using the four ribonucleoside triphosphates as substrates. Component of RNA polymerase II which synthesizes mRNA precursors and many functional non-coding RNAs. Pol II is the central component of the basal RNA polymerase II transcription machinery. It is composed of mobile elements that move relative to each other. POLR2I/RPB9 is part of the upper jaw surrounding the central large cleft and thought to grab the incoming DNA template. The sequence is that of DNA-directed RNA polymerase II subunit RPB9 (POLR2I) from Bos taurus (Bovine).